A 357-amino-acid chain; its full sequence is MGCTMSAEDRAAAERSRDIEKKLKEDGIQAAKDIKLLLLGAGESGKSTIVKQMKIIHEGGFTSEDNKQYKPVVYSNTIQSLVAIVRAMSTLNIPYGDNEREEIKSDAKIVLDVIARMEDTEPFSEELLAAMKRLWTDTGVQECFGRSNEYQLNDSAKYFLDDLDRLGSKDYMPTEQDILRTRVKTTGIVEVHFSFKNLNFKLFDVGGQRSERKKWIHCFEDVTAIIFCVAMSEYDQVLHEDETTNRMQESLKLFDNICNNKWFTDTSIILFLNKKDLFEEKIKKSSLTICFNEYTGNQTYEEAAAYIQAQFEAKNKSSSKEIYCHQTCATDTNNIQFVFDAVTDVIIANNLRGCGLY.

Glycine 2 carries N-myristoyl glycine lipidation. The S-palmitoyl cysteine moiety is linked to residue cysteine 3. The G-alpha domain maps to lysine 32–tyrosine 357. The tract at residues lysine 35–threonine 48 is G1 motif. GTP is bound by residues glycine 40–serine 47, leucine 179–threonine 185, aspartate 204–glutamine 208, asparagine 273–aspartate 276, and alanine 329. Positions 47 and 185 each coordinate Mg(2+). The segment at aspartate 177–threonine 185 is G2 motif. Positions phenylalanine 200–arginine 209 are G3 motif. The G4 motif stretch occupies residues isoleucine 269–aspartate 276. The tract at residues threonine 327–threonine 332 is G5 motif.

It belongs to the G-alpha family. G(i/o/t/z) subfamily. As to quaternary structure, g proteins are composed of 3 units; alpha, beta and gamma. The alpha chain contains the guanine nucleotide binding site.

Guanine nucleotide-binding proteins (G proteins) are involved as modulators or transducers in various transmembrane signaling systems. The G(o) protein function is not clear. In Mizuhopecten yessoensis (Japanese scallop), this protein is Guanine nucleotide-binding protein G(o) subunit alpha (SCGOA).